The primary structure comprises 322 residues: Eukaryotic translation initiation factor 3 subunit I (322 aa).

5 WD repeats span residues 4–43 (GHER…RLGT), 46–85 (GHQG…VIAS), 141–180 (MVES…KVVD), 184–223 (DHTA…CLKT), and 281–322 (GHFG…NIFE).

The protein belongs to the eIF-3 subunit I family. As to quaternary structure, component of the eukaryotic translation initiation factor 3 (eIF-3) complex. The eIF-3 complex interacts with pix.

The protein localises to the cytoplasm. Its function is as follows. Component of the eukaryotic translation initiation factor 3 (eIF-3) complex, which is involved in protein synthesis of a specialized repertoire of mRNAs and, together with other initiation factors, stimulates binding of mRNA and methionyl-tRNAi to the 40S ribosome. The eIF-3 complex specifically targets and initiates translation of a subset of mRNAs involved in cell proliferation. The chain is Eukaryotic translation initiation factor 3 subunit I from Drosophila virilis (Fruit fly).